We begin with the raw amino-acid sequence, 307 residues long: Porphobilinogen deaminase (307 aa).

S-(dipyrrolylmethanemethyl)cysteine is present on C239.

The protein belongs to the HMBS family. Monomer. Requires dipyrromethane as cofactor.

It catalyses the reaction 4 porphobilinogen + H2O = hydroxymethylbilane + 4 NH4(+). It functions in the pathway porphyrin-containing compound metabolism; protoporphyrin-IX biosynthesis; coproporphyrinogen-III from 5-aminolevulinate: step 2/4. Its function is as follows. Tetrapolymerization of the monopyrrole PBG into the hydroxymethylbilane pre-uroporphyrinogen in several discrete steps. The protein is Porphobilinogen deaminase (hemC) of Campylobacter jejuni subsp. jejuni serotype O:2 (strain ATCC 700819 / NCTC 11168).